We begin with the raw amino-acid sequence, 437 residues long: Tryptophan--tRNA ligase (437 aa).

A 'HIGH' region motif is present at residues 74 to 82; it reads PSGKVHLGH. A 'KMSKS' region motif is present at residues 321–325; sequence KMSSS.

It belongs to the class-I aminoacyl-tRNA synthetase family.

Its subcellular location is the cytoplasm. It carries out the reaction tRNA(Trp) + L-tryptophan + ATP = L-tryptophyl-tRNA(Trp) + AMP + diphosphate + H(+). This chain is Tryptophan--tRNA ligase, found in Methanosarcina acetivorans (strain ATCC 35395 / DSM 2834 / JCM 12185 / C2A).